Here is a 137-residue protein sequence, read N- to C-terminus: Nucleoside diphosphate kinase (137 aa).

ATP is bound by residues lysine 10, phenylalanine 58, arginine 86, threonine 92, arginine 103, and asparagine 113. The Pros-phosphohistidine intermediate role is filled by histidine 116.

It belongs to the NDK family. Homotetramer. Mg(2+) serves as cofactor.

Its subcellular location is the cytoplasm. It carries out the reaction a 2'-deoxyribonucleoside 5'-diphosphate + ATP = a 2'-deoxyribonucleoside 5'-triphosphate + ADP. The catalysed reaction is a ribonucleoside 5'-diphosphate + ATP = a ribonucleoside 5'-triphosphate + ADP. Functionally, major role in the synthesis of nucleoside triphosphates other than ATP. The ATP gamma phosphate is transferred to the NDP beta phosphate via a ping-pong mechanism, using a phosphorylated active-site intermediate. The chain is Nucleoside diphosphate kinase from Helicobacter pylori (strain G27).